The primary structure comprises 447 residues: UPF0210 protein LCK_00974 (447 aa).

It belongs to the UPF0210 family. In terms of assembly, homodimer.

This is UPF0210 protein LCK_00974 from Leuconostoc citreum (strain KM20).